The following is a 336-amino-acid chain: DNA polymerase beta (336 aa).

Positions 59, 61, and 64 each coordinate K(+). Na(+) is bound by residues Lys59, Leu61, and Val64. Lys71 acts as the Nucleophile; Schiff-base intermediate with DNA; for 5'-dRP lyase activity in catalysis. Position 82 is an omega-N-methylarginine; by PRMT6 (Arg82). Residues Thr100, Val102, and Ile105 each contribute to the K(+) site. Residues Thr100, Val102, and Ile105 each contribute to the Na(+) site. Arg148 provides a ligand contact to a 2'-deoxyribonucleoside 5'-triphosphate. Arg151 carries the omega-N-methylarginine; by PRMT6 modification. Positions 179, 182, 188, and 189 each coordinate a 2'-deoxyribonucleoside 5'-triphosphate. Residues 182-191 form a DNA-binding region; it reads RGAESSGDID. Mg(2+) is bound by residues Asp189, Asp191, and Asp257.

Belongs to the DNA polymerase type-X family. Mg(2+) serves as cofactor. In terms of processing, methylation by PRMT6 stimulates the polymerase activity by enhancing DNA binding and processivity. Post-translationally, ubiquitinated: monoubiquitinated by huwe1/arf-bp1. Monoubiquitinated protein is then the target of stub1/chip, which catalyzes polyubiquitination from monoubiquitin, leading to degradation by the proteasome. usp47 mediates the deubiquitination of monoubiquitinated protein, preventing polyubiquitination by STUB1/CHIP and its subsequent degradation.

The protein localises to the nucleus. The protein resides in the cytoplasm. The catalysed reaction is DNA(n) + a 2'-deoxyribonucleoside 5'-triphosphate = DNA(n+1) + diphosphate. The enzyme catalyses a 5'-end 2'-deoxyribose-2'-deoxyribonucleotide-DNA = (2E,4S)-4-hydroxypenten-2-al-5-phosphate + a 5'-end 5'-phospho-2'-deoxyribonucleoside-DNA + H(+). It catalyses the reaction 2'-deoxyribonucleotide-(2'-deoxyribose 5'-phosphate)-2'-deoxyribonucleotide-DNA = a 3'-end 2'-deoxyribonucleotide-(2,3-dehydro-2,3-deoxyribose 5'-phosphate)-DNA + a 5'-end 5'-phospho-2'-deoxyribonucleoside-DNA + H(+). Its function is as follows. Repair polymerase that plays a key role in base-excision repair. During this process, the damaged base is excised by specific DNA glycosylases, the DNA backbone is nicked at the abasic site by an apurinic/apyrimidic (AP) endonuclease, and POLB removes 5'-deoxyribose-phosphate from the preincised AP site acting as a 5'-deoxyribose-phosphate lyase (5'-dRP lyase); through its DNA polymerase activity, it adds one nucleotide to the 3' end of the arising single-nucleotide gap. Conducts 'gap-filling' DNA synthesis in a stepwise distributive fashion rather than in a processive fashion as for other DNA polymerases. It is also able to cleave sugar-phosphate bonds 3' to an intact AP site, acting as an AP lyase. The polypeptide is DNA polymerase beta (polb) (Danio rerio (Zebrafish)).